A 241-amino-acid chain; its full sequence is ATP phosphoribosyltransferase (241 aa).

This sequence belongs to the ATP phosphoribosyltransferase family. Short subfamily. In terms of assembly, heteromultimer composed of HisG and HisZ subunits.

It is found in the cytoplasm. It catalyses the reaction 1-(5-phospho-beta-D-ribosyl)-ATP + diphosphate = 5-phospho-alpha-D-ribose 1-diphosphate + ATP. It functions in the pathway amino-acid biosynthesis; L-histidine biosynthesis; L-histidine from 5-phospho-alpha-D-ribose 1-diphosphate: step 1/9. In terms of biological role, catalyzes the condensation of ATP and 5-phosphoribose 1-diphosphate to form N'-(5'-phosphoribosyl)-ATP (PR-ATP). Has a crucial role in the pathway because the rate of histidine biosynthesis seems to be controlled primarily by regulation of HisG enzymatic activity. The polypeptide is ATP phosphoribosyltransferase (Gluconobacter oxydans (strain 621H) (Gluconobacter suboxydans)).